We begin with the raw amino-acid sequence, 202 residues long: Histone chaperone ASF1B (202 aa).

Positions 1–156 (MAKVSVLNVA…TRFHINWDNN (156 aa)) are interaction with histone H3 and CHAF1B. Residue Ser-198 is modified to Phosphoserine; by TLK2.

This sequence belongs to the ASF1 family. In terms of assembly, interacts with histone H3 (via C-terminus), including histone H3.1, H3.2 and H3.3, and histone H4; the interaction with H3 is direct. Interacts with the CHAF1A, CHAF1B and RBBP4 subunits of the CAF-1 complex. Interacts with HAT1, NASP and TAF1. Found in a soluble complex with NASP and histones H3 and H4; the interaction with NASP is probably indirect and mediated by H3-H4. Interacts with CDAN1. Found in a cytosolic complex with CDAN1, ASF1A, IPO4 and histones H3.1 and H4. Interacts with CREBBP. Post-translationally, phosphorylated by TLK2. Phosphorylated by TLK1. As to expression, highly expressed in germ cells. Restricted to premeiotic to meiotic stages during spermatogenesis.

It is found in the nucleus. It localises to the cytoplasm. The protein resides in the cytosol. Its function is as follows. Histone chaperone that facilitates histone deposition and histone exchange and removal during nucleosome assembly and disassembly. Cooperates with chromatin assembly factor 1 (CAF-1) to promote replication-dependent chromatin assembly. Also involved in the nuclear import of the histone H3-H4 dimer together with importin-4 (IPO4): specifically recognizes and binds newly synthesized histones with the monomethylation of H3 'Lys-9' (H3K9me1) and diacetylation at 'Lys-5' and 'Lys-12' of H4 (H4K5ac and H4K12ac) marks in the cytosol. Does not participate in replication-independent nucleosome deposition which is mediated by ASF1A and HIRA. Required for gonad development. The protein is Histone chaperone ASF1B of Mus musculus (Mouse).